The following is a 773-amino-acid chain: 3-isopropylmalate dehydratase (773 aa).

Residues C355, C415, and C418 each coordinate [4Fe-4S] cluster.

It belongs to the aconitase/IPM isomerase family. Monomer. It depends on [4Fe-4S] cluster as a cofactor.

The enzyme catalyses (2R,3S)-3-isopropylmalate = (2S)-2-isopropylmalate. Its pathway is amino-acid biosynthesis; L-leucine biosynthesis; L-leucine from 3-methyl-2-oxobutanoate: step 2/4. Functionally, catalyzes the isomerization between 2-isopropylmalate and 3-isopropylmalate, via the formation of 2-isopropylmaleate. This Mycosarcoma maydis (Corn smut fungus) protein is 3-isopropylmalate dehydratase (LEU1).